The primary structure comprises 78 residues: Alpha-amylase inhibitor Haim-1 (78 aa).

Intrachain disulfides connect C11–C27 and C45–C72.

Its function is as follows. Inhibits mammalian alpha-amylases specifically but has no action on plant and microbial alpha-amylases. This is Alpha-amylase inhibitor Haim-1 from Streptomyces griseosporeus.